The following is a 64-amino-acid chain: DNA gyrase inhibitor YacG (64 aa).

Zn(2+) contacts are provided by Cys-7, Cys-10, Cys-26, and Cys-30. A disordered region spans residues 43–64 (KRIPGPINPDLLPYPDEGEQWQ).

The protein belongs to the DNA gyrase inhibitor YacG family. In terms of assembly, interacts with GyrB. Zn(2+) serves as cofactor.

In terms of biological role, inhibits all the catalytic activities of DNA gyrase by preventing its interaction with DNA. Acts by binding directly to the C-terminal domain of GyrB, which probably disrupts DNA binding by the gyrase. This Aeromonas salmonicida (strain A449) protein is DNA gyrase inhibitor YacG.